The following is a 22-amino-acid chain: Large ribosomal subunit protein bL32 (22 aa).

The segment at 1–22 is disordered; sequence CVQQNKKSRSARDMXXSXDALE. A compositionally biased stretch (low complexity) spans 13–22; sequence DMXXSXDALE.

Belongs to the bacterial ribosomal protein bL32 family.

The chain is Large ribosomal subunit protein bL32 (rpmF) from Ectopseudomonas mendocina (Pseudomonas mendocina).